A 236-amino-acid polypeptide reads, in one-letter code: Geranylgeranylglyceryl phosphate synthase (236 aa).

K13 provides a ligand contact to sn-glycerol 1-phosphate. 2 residues coordinate Mg(2+): D15 and T42. Sn-glycerol 1-phosphate is bound by residues 161–166 (YVEYSG), G191, and 211–212 (GD).

It belongs to the GGGP/HepGP synthase family. Group I subfamily. Requires Mg(2+) as cofactor.

It localises to the cytoplasm. It carries out the reaction sn-glycerol 1-phosphate + (2E,6E,10E)-geranylgeranyl diphosphate = sn-3-O-(geranylgeranyl)glycerol 1-phosphate + diphosphate. It functions in the pathway membrane lipid metabolism; glycerophospholipid metabolism. Prenyltransferase that catalyzes the transfer of the geranylgeranyl moiety of geranylgeranyl diphosphate (GGPP) to the C3 hydroxyl of sn-glycerol-1-phosphate (G1P). This reaction is the first ether-bond-formation step in the biosynthesis of archaeal membrane lipids. This Halobacterium salinarum (strain ATCC 700922 / JCM 11081 / NRC-1) (Halobacterium halobium) protein is Geranylgeranylglyceryl phosphate synthase.